The sequence spans 246 residues: DNA repair protein RecO (246 aa).

The protein belongs to the RecO family.

Involved in DNA repair and RecF pathway recombination. This chain is DNA repair protein RecO, found in Alkaliphilus metalliredigens (strain QYMF).